We begin with the raw amino-acid sequence, 981 residues long: Rab3 GTPase-activating protein catalytic subunit (981 aa).

Phosphoserine is present on residues S83, S379, S536, S579, S581, and S590. The disordered stretch occupies residues 532-558 (GKKTSLSDSTTSAYPGDAGKTGGQLGL). The segment at 591–614 (DTEDLKGNGQESGKKGGPKEMANL) is disordered. At S664 the chain carries Phosphoserine.

Belongs to the Rab3-GAP catalytic subunit family. As to quaternary structure, the Rab3 GTPase-activating complex is a heterodimer composed of Rab3gap1 and Rab3gap2. The Rab3 GTPase-activating complex interacts with DMXL2. Interacts with LMAN1. In the eye, it is highly expressed within the lens, particularly in the anterior lens epithelium and in a ring corresponding to the equatorial region where anterior cells are differentiating into lens fibers. Also highly expressed in the retina.

It is found in the cytoplasm. The protein localises to the endoplasmic reticulum. It localises to the golgi apparatus. Its subcellular location is the cis-Golgi network. Its function is as follows. Catalytic subunit of the Rab3 GTPase-activating (Rab3GAP) complex composed of RAB3GAP1 and RAB3GAP2, which has GTPase-activating protein (GAP) activity towards various Rab3 subfamily members (RAB3A, RAB3B, RAB3C and RAB3D), RAB5A and RAB43, and guanine nucleotide exchange factor (GEF) activity towards RAB18. As part of the Rab3GAP complex, acts as a GAP for Rab3 proteins by converting active RAB3-GTP to the inactive form RAB3-GDP. Rab3 proteins are involved in regulated exocytosis of neurotransmitters and hormones. The Rab3GAP complex, acts as a GEF for RAB18 by promoting the conversion of inactive RAB18-GDP to the active form RAB18-GTP. Recruits and stabilizes RAB18 at the cis-Golgi membrane where RAB18 is most likely activated. Also involved in RAB18 recruitment at the endoplasmic reticulum (ER) membrane where it maintains proper ER structure. Required for normal eye and brain development. May participate in neurodevelopmental processes such as proliferation, migration and differentiation before synapse formation, and non-synaptic vesicular release of neurotransmitters. This chain is Rab3 GTPase-activating protein catalytic subunit, found in Mus musculus (Mouse).